The sequence spans 639 residues: Immunoglobulin-like domain-containing receptor 2 (639 aa).

The N-terminal stretch at 1 to 20 (MDRVLLRWISLFWLTAMVEG) is a signal peptide. One can recognise an Ig-like V-type domain in the interval 21–162 (LQVTVPDKKK…LEGKNEDSVE (142 aa)). The Lumenal portion of the chain corresponds to 21–186 (LQVTVPDKKK…PSFAVEIMPE (166 aa)). Cysteine 42 and cysteine 145 are oxidised to a cystine. A helical transmembrane segment spans residues 187–207 (WVFVGLVLLGVFLFFVLVGIC). Residues 208–639 (WCQCCPHSCC…DFPTRMSLVV (432 aa)) are Cytoplasmic-facing. 3 disordered regions span residues 273-295 (LMDK…HSVR), 374-415 (WSGV…MLSR), and 437-639 (YGQR…SLVV). 2 stretches are compositionally biased toward basic and acidic residues: residues 393 to 414 (YNKE…EMLS) and 442 to 464 (RRAD…ESRA). Phosphoserine is present on serine 473. Over residues 483–493 (RSREPLTDADR) the composition is skewed to basic and acidic residues. An Omega-N-methylarginine modification is found at arginine 544. Serine 579 is modified (phosphoserine). Residues 606-617 (RGRDLPYHSNSE) are compositionally biased toward basic and acidic residues.

This sequence belongs to the immunoglobulin superfamily. LISCH7 family. In terms of assembly, interacts with MARVELD2 and OCLN. Interacts with P4HB AND HSPA5; the interaction with HSPA5 stabilizes ILDR2 expression. Interacts (via C-terminus) with TRA2A, TRA2B and SRSF1. In terms of tissue distribution, expressed in testis, brain, pituitary, colon, heart, nerves, prostate, esophagus, lung liver and small intestine. Highly expressed in macrophages, also expressed in monocytes and at low levels in NK and NKT cells (at protein level).

Its subcellular location is the endoplasmic reticulum membrane. The protein localises to the cell junction. It localises to the tight junction. It is found in the nucleus. Functionally, may be involved in ER stress pathways with effects on lipid homeostasis and insulin secretion. With ILDR1 and LSR, involved in the maintain of the epithelial barrier function through the recruitment of MARVELD2/tricellulin to tricellular tight junctions. Also functions as a B7-like protein family member expressed on immune cells and inflamed tissue and with T-cell inhibitory activity. In the inner ear, may regulate alternative pre-mRNA splicing via binding to TRA2A, TRA2B and SRSF1. In Homo sapiens (Human), this protein is Immunoglobulin-like domain-containing receptor 2.